Reading from the N-terminus, the 398-residue chain is Putative molybdopterin biosynthesis protein MJ0666 (398 aa).

This sequence belongs to the MoeA family.

It functions in the pathway cofactor biosynthesis; molybdopterin biosynthesis. This Methanocaldococcus jannaschii (strain ATCC 43067 / DSM 2661 / JAL-1 / JCM 10045 / NBRC 100440) (Methanococcus jannaschii) protein is Putative molybdopterin biosynthesis protein MJ0666.